We begin with the raw amino-acid sequence, 1237 residues long: MSSAPRRPASGADSLHTPEPESLSPGTPGFPEQEEDELRTLGVERFEEILQEAGSRGGEEPGRSYGEEDFEYHRQSSHHIHHPLSTHLPPDARRRKTPQGPGRKPRRRPGASPTGETPTIEEGEEDEEEASEAEGFRAPPQQPSPATTPSAVQFFLQEDEGAERKPERTSPSPPTQTPHQEAAPRASKGAQTGTLVEEMVAVASATAGGDDGGAAGRPLTKAQPGHRSYNLQERRRIGSMTGVEQALLPRVPTDESEAQTLATADLDLMKSHRFEDVPGVRRHLVRKNAKGSTQAAREGREPGPTPRARPRAPHKPHEVFVELNELLLDKNQEPQWRETARWIKFEEDVEEETERWGKPHVASLSFRSLLELRRTLAHGAVLLDLDQQTLPGVAHQVVEQMVISDQIKAEDRANVLRALLLKHSHPSDEKEFSFPRNISAGSLGSLLGHHHAQGTESDPHVTEPLIGGVPETRLEVDRERELPPPAPPAGITRSKSKHELKLLEKIPENAEATVVLVGCVEFLSRPTMAFVRLREAVELDAVLEVPVPVRFLFLLLGPSSANMDYHEIGRSISTLMSDKQFHEAAYLADERDDLLTAINAFLDCSVVLPPSEVQGEELLRSVAHFQRQMLKKREEQGRLLPPGAGLEPKSAQDKALLQMVEVAGAAEDDPLRRTGRPFGGLIRDVRRRYPHYLSDFRDALDPQCLAAVIFIYFAALSPAITFGGLLGEKTKDLIGVSELIMSTALQGVVFCLLGAQPLLVIGFSGPLLVFEEAFFSFCSSNELEYLVGRVWIGFWLVFLALLMVALEGSFLVRFVSRFTQEIFAFLISLIFIYETFYKLIKIFQEHPLHGCSGSNDSEAGSSSSSNMTWATTILVPDNSSASGQSGQEKPRGQPNTALLSLVLMAGTFFIAFFLRKFKNSRFFPGRIRRVIGDFGVPIAILIMVLVDYSIEDTYTQKLSVPSGFSVTAPDKRGWVINPLGEKTPFPVWMMVASLLPAVLVFILIFMETQITTLIISKKERMLQKGSGFHLDLLLIVAMGGICALFGLPWLAAATVRSVTHANALTVMSKAVAPGDKPKIQEVKEQRVTGLLVALLVGLSMVIGDLLRQIPLAVLFGIFLYMGVTSLNGIQFYERLHLLLMPPKHHPDVTYVKKVRTMRMHLFTALQLLCLALLWAVMSTAASLAFPFILILTVPLRMVVLTRIFTEREMKCLDANEAEPVFDECEGVDEYNEMPMPV.

Positions 1-238 (MSSAPRRPAS…YNLQERRRIG (238 aa)) are disordered. Residues 1-703 (MSSAPRRPAS…SDFRDALDPQ (703 aa)) lie on the Cytoplasmic side of the membrane. Basic and acidic residues-rich tracts occupy residues 38–48 (LRTLGVERFEE) and 57–74 (GGEEPGRSYGEEDFEYHR). Basic residues-rich tracts occupy residues 75 to 84 (QSSHHIHHPL) and 93 to 109 (RRRKTPQGPGRKPRRRP). Phosphoserine is present on residues serine 112, serine 131, serine 144, serine 170, serine 172, and serine 239. A compositionally biased stretch (acidic residues) spans 119-132 (TIEEGEEDEEEASE). Position 253 is a phosphothreonine (threonine 253). Position 270 is an N6-methyllysine (lysine 270). The disordered stretch occupies residues 285 to 316 (VRKNAKGSTQAAREGREPGPTPRARPRAPHKP). Serine 439 bears the Phosphoserine mark. Residues 445-466 (SLLGHHHAQGTESDPHVTEPLI) are disordered. 4 helical membrane-spanning segments follow: residues 704–727 (CLAAVIFIYFAALSPAITFGGLLG), 733–770 (LIGVSELIMSTALQGVVFCLLGAQPLLVIGFSGPLLVF), 790–812 (VWIGFWLVFLALLMVALEGSFLV), and 822–843 (IFAFLISLIFIYETFYKLIKIF). A membrane (anion exchange) region spans residues 704 to 1237 (CLAAVIFIYF…DEYNEMPMPV (534 aa)). Over 844–896 (QEHPLHGCSGSNDSEAGSSSSSNMTWATTILVPDNSSASGQSGQEKPRGQPNT) the chain is Extracellular. Residues asparagine 855, asparagine 866, and asparagine 878 are each glycosylated (N-linked (GlcNAc...) asparagine). The helical transmembrane segment at 897 to 914 (ALLSLVLMAGTFFIAFFL) threads the bilayer. Residues 915 to 929 (RKFKNSRFFPGRIRR) are Cytoplasmic-facing. Transmembrane regions (helical) follow at residues 930–950 (VIGDFGVPIAILIMVLVDYSI), 984–1006 (PFPVWMMVASLLPAVLVFILIFM), 1032–1053 (LLLIVAMGGICALFGLPWLAAA), 1087–1132 (VTGL…IQFY), and 1159–1195 (MHLFTALQLLCLALLWAVMSTAASLAFPFILILTVPL). The S-palmitoyl cysteine moiety is linked to residue cysteine 1169.

This sequence belongs to the anion exchanger (TC 2.A.31) family. As to expression, expressed in the choroid plexus epithelium (at protein level). Expressed in the parotid gland and sublingual salivary gland acinar cells (at protein level). Widely expressed at similar levels in all tissues examined. Expressed in the testis. In terms of tissue distribution, predominantly expressed in stomach although they are also detected at lower levels in other tissues. Expressed in the testis. As to expression, stomach-specific. Expressed at slightly higher levels in lung and stomach than in other tissues.

It is found in the apical cell membrane. The protein resides in the basolateral cell membrane. It carries out the reaction hydrogencarbonate(in) + chloride(out) = hydrogencarbonate(out) + chloride(in). Inhibited by 4,4'-diisothiocyanatostilbene-2,2'-disulfonic acid (DIDS) and acetazolamide. Muscarinic receptor stimulation enhances activity through a Ca(2+)-dependent mechanism. Sodium-independent anion exchanger which mediates the electroneutral exchange of chloride for bicarbonate ions across the cell membrane. Plays an important role in osteoclast differentiation and function. Regulates bone resorption and calpain-dependent actin cytoskeleton organization in osteoclasts via anion exchange-dependent control of pH. Essential for intracellular pH regulation in CD8(+) T-cells upon CD3 stimulation, modulating CD8(+) T-cell responses. Functionally, plays a critical role in male fertility and spermiogenesis. The protein is Anion exchange protein 2 (Slc4a2) of Mus musculus (Mouse).